Here is a 527-residue protein sequence, read N- to C-terminus: Probable guanine deaminase (527 aa).

Positions 79 and 81 each coordinate Zn(2+). Substrate-binding positions include 81 to 84 (HAPQ), 212 to 213 (RF), 239 to 242 (HISE), and Asp-329. Zn(2+) contacts are provided by His-239 and Asp-329.

The protein belongs to the metallo-dependent hydrolases superfamily. ATZ/TRZ family. It depends on Zn(2+) as a cofactor.

It catalyses the reaction guanine + H2O + H(+) = xanthine + NH4(+). It participates in purine metabolism; guanine degradation; xanthine from guanine: step 1/1. Functionally, catalyzes the hydrolytic deamination of guanine, producing xanthine and ammonia. The sequence is that of Probable guanine deaminase from Schizosaccharomyces pombe (strain 972 / ATCC 24843) (Fission yeast).